Here is a 430-residue protein sequence, read N- to C-terminus: Zinc finger CCCH domain-containing protein 48 (430 aa).

Disordered regions lie at residues 1 to 27 (MDLD…TTDS) and 56 to 90 (GSGP…GTAN). A C3H1-type 1 zinc finger spans residues 26-52 (DSNQKVCFHWRAGRCNRYPCPYLHREL). The C3H1-type 2 zinc finger occupies 102–129 (TKTEKLCKFWVDGNCPYGDKCRYLHCWS). WD repeat units follow at residues 142-183 (GHQK…GVLN), 221-258 (GPVG…SCFD), 265-304 (GHTL…QTLT), 306-342 (HTSV…NLEV), 345-389 (THKE…ERGK), and 391-429 (LAKQ…TPIL).

The polypeptide is Zinc finger CCCH domain-containing protein 48 (ZFWD1) (Arabidopsis thaliana (Mouse-ear cress)).